Consider the following 338-residue polypeptide: Tagatose 1,6-diphosphate aldolase (338 aa).

Belongs to the aldolase LacD family.

The enzyme catalyses D-tagatofuranose 1,6-bisphosphate = D-glyceraldehyde 3-phosphate + dihydroxyacetone phosphate. It participates in carbohydrate metabolism; D-tagatose 6-phosphate degradation; D-glyceraldehyde 3-phosphate and glycerone phosphate from D-tagatose 6-phosphate: step 2/2. The sequence is that of Tagatose 1,6-diphosphate aldolase from Listeria monocytogenes serotype 4a (strain HCC23).